Here is a 359-residue protein sequence, read N- to C-terminus: RuBisCO accumulation factor 1 (359 aa).

The tract at residues 12 to 195 (LSPEETDALF…RQKIEQLLSD (184 aa)) is N-terminal alpha-helix. The tract at residues 219 to 345 (PLLIPVAGSL…VLLVMRPKKI (127 aa)) is C-terminal beta-sheet.

It belongs to the RAF family. Homodimer. Forms an RbcL(8)-Raf1(8) complex. Forms complexes of many stoichiometries with RbcL with and without RbcS. RbcX and Raf1 can bind simultaneously to RbcL.

It localises to the cytoplasm. Functionally, a major RuBisCO chaperone. Acts after GroEL-GroES chaperonin to fold and/or assemble the large subunit of RuBisCO (ccbL, rbcL). Cooperates with RbcX in RbcL folding, plays the major role in assembly of dimers into RbcL(8)-Raf1(8) intermediate complexes. RbcS replaces Raf1, leading to holoenzyme formation. Its function is as follows. Raf1 and RbcX are probably functionally redundant; it has been suggested they may cooperate. The protein is RuBisCO accumulation factor 1 of Picosynechococcus sp. (strain ATCC 27264 / PCC 7002 / PR-6) (Agmenellum quadruplicatum).